Consider the following 206-residue polypeptide: Pyridoxal 5'-phosphate synthase subunit PdxT (206 aa).

Residue 59-61 (GES) participates in L-glutamine binding. C91 serves as the catalytic Nucleophile. L-glutamine contacts are provided by residues R123 and 151–152 (IR). Catalysis depends on charge relay system residues H187 and E189.

This sequence belongs to the glutaminase PdxT/SNO family. As to quaternary structure, in the presence of PdxS, forms a dodecamer of heterodimers. Only shows activity in the heterodimer.

It catalyses the reaction aldehydo-D-ribose 5-phosphate + D-glyceraldehyde 3-phosphate + L-glutamine = pyridoxal 5'-phosphate + L-glutamate + phosphate + 3 H2O + H(+). The enzyme catalyses L-glutamine + H2O = L-glutamate + NH4(+). The protein operates within cofactor biosynthesis; pyridoxal 5'-phosphate biosynthesis. Catalyzes the hydrolysis of glutamine to glutamate and ammonia as part of the biosynthesis of pyridoxal 5'-phosphate. The resulting ammonia molecule is channeled to the active site of PdxS. The chain is Pyridoxal 5'-phosphate synthase subunit PdxT from Mycobacterium sp. (strain JLS).